Here is a 343-residue protein sequence, read N- to C-terminus: tRNA N6-adenosine threonylcarbamoyltransferase (343 aa).

Positions 111 and 115 each coordinate Fe cation. Substrate contacts are provided by residues 133-137 (AVSGG), aspartate 166, glycine 179, aspartate 183, and asparagine 273. Fe cation is bound at residue aspartate 301.

This sequence belongs to the KAE1 / TsaD family. Fe(2+) serves as cofactor.

Its subcellular location is the cytoplasm. It catalyses the reaction L-threonylcarbamoyladenylate + adenosine(37) in tRNA = N(6)-L-threonylcarbamoyladenosine(37) in tRNA + AMP + H(+). Its function is as follows. Required for the formation of a threonylcarbamoyl group on adenosine at position 37 (t(6)A37) in tRNAs that read codons beginning with adenine. Is involved in the transfer of the threonylcarbamoyl moiety of threonylcarbamoyl-AMP (TC-AMP) to the N6 group of A37, together with TsaE and TsaB. TsaD likely plays a direct catalytic role in this reaction. The chain is tRNA N6-adenosine threonylcarbamoyltransferase from Geotalea uraniireducens (strain Rf4) (Geobacter uraniireducens).